Reading from the N-terminus, the 115-residue chain is Small polypeptide DEVIL 13 (115 aa).

The span at 1 to 12 (MEEKWKLSKKDT) shows a compositional bias: basic and acidic residues. The disordered stretch occupies residues 1–89 (MEEKWKLSKK…SITQKYSSLA (89 aa)). Over residues 13–65 (TASSSSSKSKFSRSFSTSASSTKSPIFVRSSSTKCSVPSSSSSSSSSSSISRS) the composition is skewed to low complexity. Residues 44–63 (STKCSVPSSSSSSSSSSSIS) traverse the membrane as a helical segment. The interval 80-111 (SITQKYSSLAKEQKARFYIMRRCVAMLVCWHK) is required for DVL/RTFL small polypeptide activity.

This sequence belongs to the DVL/RTFL small polypeptides family.

Its subcellular location is the cell membrane. Small polypeptide acting as a regulatory molecule which coordinates cellular responses required for differentiation, growth and development, probably by restricting polar cell proliferation in lateral organs and coordinating socket cell recruitment and differentiation at trichome sites. This Arabidopsis thaliana (Mouse-ear cress) protein is Small polypeptide DEVIL 13.